Reading from the N-terminus, the 162-residue chain is Ribonuclease (162 aa).

The N-terminal stretch at 1 to 29 (MKKISSVFTMFALIAAILFSGFIPQQAYA) is a signal peptide. Positions 30–53 (ETPLTQTATNETATIQLTSDVHTL) are excised as a propeptide. Glu125 serves as the catalytic Proton acceptor. The Proton donor role is filled by His154.

This sequence belongs to the ribonuclease N1/T1 family.

The protein localises to the secreted. Its function is as follows. This is a purine-specific ribonuclease. The sequence is that of Ribonuclease from Bacillus intermedius.